We begin with the raw amino-acid sequence, 142 residues long: Sorting nexin-3 (142 aa).

The PX domain maps to 21-138 (NFLEIEVRNP…ASFIQDPNWD (118 aa)). R64, S66, K90, R95, and R104 together coordinate a 1,2-diacyl-sn-glycero-3-phospho-(1D-myo-inositol-3-phosphate).

Belongs to the sorting nexin family.

The protein localises to the cytoplasm. It is found in the golgi apparatus membrane. The protein resides in the prevacuolar compartment membrane. Required for retention of late Golgi membrane proteins. Component of the retrieval machinery that functions by direct interaction with the cytosolic tails of certain TGN membrane proteins during the sorting/budding process at the prevacuolar compartment. Binds phosphatidylinositol 3-phosphate (PtdIns(P3)). The protein is Sorting nexin-3 (snx3) of Aspergillus fumigatus (strain ATCC MYA-4609 / CBS 101355 / FGSC A1100 / Af293) (Neosartorya fumigata).